Here is a 968-residue protein sequence, read N- to C-terminus: Protein translocase subunit SecA 1 (968 aa).

Residues Gln-86, 104–108 (GEGKT), and Asp-493 each bind ATP. 2 stretches are compositionally biased toward basic and acidic residues: residues 858–868 (EAEKTEDKAED) and 883–898 (ESAKDTAQDKDAESVA). The disordered stretch occupies residues 858 to 968 (EAEKTEDKAE…KCHGAPKSRV (111 aa)). The Zn(2+) site is built by Cys-949, Cys-951, Cys-960, and His-961. The span at 955 to 968 (KKYKKCHGAPKSRV) shows a compositional bias: basic residues.

It belongs to the SecA family. Monomer and homodimer. Part of the essential Sec protein translocation apparatus which comprises SecA, SecYEG and auxiliary proteins SecDF. Other proteins may also be involved. Zn(2+) serves as cofactor.

It is found in the cell membrane. Its subcellular location is the cytoplasm. It catalyses the reaction ATP + H2O + cellular proteinSide 1 = ADP + phosphate + cellular proteinSide 2.. In terms of biological role, part of the Sec protein translocase complex. Interacts with the SecYEG preprotein conducting channel. Has a central role in coupling the hydrolysis of ATP to the transfer of proteins into and across the cell membrane, serving as an ATP-driven molecular motor driving the stepwise translocation of polypeptide chains across the membrane. The protein is Protein translocase subunit SecA 1 of Thermobifida fusca (strain YX).